Consider the following 183-residue polypeptide: Large ribosomal subunit protein uL5 (183 aa).

It belongs to the universal ribosomal protein uL5 family. As to quaternary structure, part of the 50S ribosomal subunit; part of the 5S rRNA/L5/L18/L25 subcomplex. Contacts the 5S rRNA and the P site tRNA. Forms a bridge to the 30S subunit in the 70S ribosome.

Its function is as follows. This is one of the proteins that bind and probably mediate the attachment of the 5S RNA into the large ribosomal subunit, where it forms part of the central protuberance. In the 70S ribosome it contacts protein S13 of the 30S subunit (bridge B1b), connecting the 2 subunits; this bridge is implicated in subunit movement. Contacts the P site tRNA; the 5S rRNA and some of its associated proteins might help stabilize positioning of ribosome-bound tRNAs. This chain is Large ribosomal subunit protein uL5, found in Corynebacterium aurimucosum (strain ATCC 700975 / DSM 44827 / CIP 107346 / CN-1) (Corynebacterium nigricans).